The chain runs to 344 residues: Lipopolysaccharide heptosyltransferase 3 (344 aa).

It belongs to the glycosyltransferase 9 family.

It catalyses the reaction an L-alpha-D-Hep-(1-&gt;3)-4-O-phospho-L-alpha-D-Hep-(1-&gt;5)-[alpha-Kdo-(2-&gt;4)]-alpha-Kdo-(2-&gt;6)-lipid A + ADP-L-glycero-beta-D-manno-heptose = an L-alpha-D-Hep-(1-&gt;7)-L-alpha-D-Hep-(1-&gt;3)-4-O-phospho-L-alpha-D-Hep-(1-&gt;5)-[alpha-Kdo-(2-&gt;4)]-alpha-Kdo-(2-&gt;6)-lipid A + ADP + H(+). It carries out the reaction L-alpha-D-Hep-(1-&gt;3)-4-O-phospho-L-alpha-D-Hep-(1-&gt;5)-[alpha-Kdo-(2-&gt;4)]-alpha-Kdo-(2-&gt;6)-lipid A (E. coli) + ADP-L-glycero-beta-D-manno-heptose = L-alpha-D-Hep-(1-&gt;7)-L-alpha-D-Hep-(1-&gt;3)-4-O-phospho-L-alpha-D-Hep-(1-&gt;5)-[alpha-Kdo-(2-&gt;4)]-alpha-Kdo-(2-&gt;6)-lipid A (E. coli) + ADP + H(+). Its pathway is bacterial outer membrane biogenesis; LPS core biosynthesis. Functionally, glycosyltransferase involved in the biosynthesis of the core oligosaccharide region of lipopolysaccharide (LPS). Catalyzes the addition of the third heptose unit (HepIII) to the second heptose unit (HepII) of the phospho-Hep2-Kdo2-lipid A module. The protein is Lipopolysaccharide heptosyltransferase 3 of Escherichia coli (strain K12).